A 254-amino-acid chain; its full sequence is Alcohol dehydrogenase (254 aa).

10-33 serves as a coordination point for NAD(+); it reads FVAGLGGIGLDTSKGIVKAGPKNL. Position 138 (serine 138) interacts with substrate. Residue tyrosine 151 is the Proton acceptor of the active site.

The protein belongs to the short-chain dehydrogenases/reductases (SDR) family. As to quaternary structure, homodimer.

The catalysed reaction is a primary alcohol + NAD(+) = an aldehyde + NADH + H(+). The enzyme catalyses a secondary alcohol + NAD(+) = a ketone + NADH + H(+). The chain is Alcohol dehydrogenase (Adh) from Drosophila immigrans (Fruit fly).